A 345-amino-acid polypeptide reads, in one-letter code: Histone H3-like centromeric protein cpar-1 (345 aa).

The disordered stretch occupies residues 117-246; the sequence is NHSNRKPLEE…SRVTKTHNRK (130 aa). Over residues 122-149 the composition is skewed to basic and acidic residues; sequence KPLEESRRREEPRDRVHESNIDITHRGD. Residues 233 to 246 are compositionally biased toward basic residues; sequence RSGKSRVTKTHNRK. The interval 263-340 is H3-like; the sequence is STDMLIQKAP…TDIQLYRRLC (78 aa).

It belongs to the histone H3 family. In terms of assembly, forms a nucleosome-like histone octamer containing two molecules each of H2A, H2B, cpar-1 and H4 assembled in one cpar-1-H4 heterotetramer and two H2A-H2B heterodimers. Cleaved at the onset of meiotic anaphase I, likely by separase sep-1.

The protein localises to the nucleus. It is found in the chromosome. Histone H3-like variant which exclusively replaces conventional H3 in the nucleosome core of centromeric chromatin at the inner plate of the kinetochore. Required for recruitment and assembly of kinetochore proteins, mitotic progression and chromosome segregation. May serve as an epigenetic mark that propagates centromere identity through replication and cell division. Not required for chromosome segregation during meiosis. The polypeptide is Histone H3-like centromeric protein cpar-1 (Caenorhabditis briggsae).